Reading from the N-terminus, the 289-residue chain is ATP synthase gamma chain (289 aa).

This sequence belongs to the ATPase gamma chain family. In terms of assembly, F-type ATPases have 2 components, CF(1) - the catalytic core - and CF(0) - the membrane proton channel. CF(1) has five subunits: alpha(3), beta(3), gamma(1), delta(1), epsilon(1). CF(0) has three main subunits: a, b and c.

The protein localises to the cell inner membrane. Its function is as follows. Produces ATP from ADP in the presence of a proton gradient across the membrane. The gamma chain is believed to be important in regulating ATPase activity and the flow of protons through the CF(0) complex. This chain is ATP synthase gamma chain, found in Leptospira biflexa serovar Patoc (strain Patoc 1 / ATCC 23582 / Paris).